Consider the following 346-residue polypeptide: Methylthioribose-1-phosphate isomerase (346 aa).

Substrate contacts are provided by residues Arg45–Ala47, Arg87, and Gln194. Asp235 (proton donor) is an active-site residue. Asn245–Lys246 is a substrate binding site.

Belongs to the eIF-2B alpha/beta/delta subunits family. MtnA subfamily.

The enzyme catalyses 5-(methylsulfanyl)-alpha-D-ribose 1-phosphate = 5-(methylsulfanyl)-D-ribulose 1-phosphate. It functions in the pathway amino-acid biosynthesis; L-methionine biosynthesis via salvage pathway; L-methionine from S-methyl-5-thio-alpha-D-ribose 1-phosphate: step 1/6. Functionally, catalyzes the interconversion of methylthioribose-1-phosphate (MTR-1-P) into methylthioribulose-1-phosphate (MTRu-1-P). This is Methylthioribose-1-phosphate isomerase from Syntrophomonas wolfei subsp. wolfei (strain DSM 2245B / Goettingen).